The sequence spans 273 residues: Orotidine 5'-phosphate decarboxylase (273 aa).

K96 acts as the Proton donor in catalysis.

This sequence belongs to the OMP decarboxylase family. Type 2 subfamily.

The enzyme catalyses orotidine 5'-phosphate + H(+) = UMP + CO2. It participates in pyrimidine metabolism; UMP biosynthesis via de novo pathway; UMP from orotate: step 2/2. This Flavobacterium johnsoniae (strain ATCC 17061 / DSM 2064 / JCM 8514 / BCRC 14874 / CCUG 350202 / NBRC 14942 / NCIMB 11054 / UW101) (Cytophaga johnsonae) protein is Orotidine 5'-phosphate decarboxylase.